Reading from the N-terminus, the 592-residue chain is Bifunctional enzyme BirA/CoaX (592 aa).

Residues 1–329 are biotin--protein ligase; sequence MTVLKPSHWR…ISLRPDNRSV (329 aa). The 177-residue stretch at 83-259 folds into the BPL/LPL catalytic domain; it reads QTALKHECAS…ELGAVLEQYA (177 aa). Positions 336-592 are type III pantothenate kinase; it reads DSERFLLLEG…AAEGGESEHA (257 aa). 344–351 contributes to the ATP binding site; the sequence is EGGNSRLK. Residues Tyr426 and 433-436 each bind substrate; that span reads GSDR. Asp435 serves as the catalytic Proton acceptor. Residue Thr458 participates in ATP binding. Substrate is bound at residue Thr508.

In the N-terminal section; belongs to the biotin--protein ligase family. The protein in the C-terminal section; belongs to the type III pantothenate kinase family. It depends on NH4(+) as a cofactor. K(+) is required as a cofactor.

The protein localises to the cytoplasm. It catalyses the reaction biotin + L-lysyl-[protein] + ATP = N(6)-biotinyl-L-lysyl-[protein] + AMP + diphosphate + H(+). The catalysed reaction is (R)-pantothenate + ATP = (R)-4'-phosphopantothenate + ADP + H(+). It functions in the pathway cofactor biosynthesis; coenzyme A biosynthesis; CoA from (R)-pantothenate: step 1/5. Its function is as follows. Activates biotin to form biotinyl-5'-adenylate and transfers the biotin moiety to biotin-accepting proteins. In terms of biological role, catalyzes the phosphorylation of pantothenate (Pan), the first step in CoA biosynthesis. This chain is Bifunctional enzyme BirA/CoaX (birA/coaX), found in Neisseria gonorrhoeae (strain ATCC 700825 / FA 1090).